Consider the following 147-residue polypeptide: MNRSDVTDLIIEAKVTRGIAWAQVAERVGRSKEWTTAACLGQMAFDAAGARAVMELFGLPPEAEPWLREVPYKGSLPTQVPADPLIYRFYELISVYGTTFKALIHEEFGDGIMSAIDFRMDLQREPDPNGDRVRIEMSGKFLPYKTY.

Catalysis depends on residues Arg88, Glu91, and Ser114.

This sequence belongs to the cyanase family.

It carries out the reaction cyanate + hydrogencarbonate + 3 H(+) = NH4(+) + 2 CO2. Its function is as follows. Catalyzes the reaction of cyanate with bicarbonate to produce ammonia and carbon dioxide. The polypeptide is Cyanate hydratase (Cupriavidus necator (strain ATCC 17699 / DSM 428 / KCTC 22496 / NCIMB 10442 / H16 / Stanier 337) (Ralstonia eutropha)).